We begin with the raw amino-acid sequence, 231 residues long: Sugar fermentation stimulation protein homolog (231 aa).

It belongs to the SfsA family.

The chain is Sugar fermentation stimulation protein homolog from Citrifermentans bemidjiense (strain ATCC BAA-1014 / DSM 16622 / JCM 12645 / Bem) (Geobacter bemidjiensis).